We begin with the raw amino-acid sequence, 155 residues long: Fibroblast growth factor 1 (155 aa).

Ala-2 is subject to N-acetylalanine. A propeptide spanning residues 2-15 (AEGEITTFSALTER) is cleaved from the precursor. Asn-33 serves as a coordination point for heparin. The segment at 127–143 (KKNGSCKRGPRTHYGQK) is heparin-binding.

This sequence belongs to the heparin-binding growth factors family. As to quaternary structure, monomer. Homodimer. Interacts with FGFR1, FGFR2, FGFR3 and FGFR4. Affinity between fibroblast growth factors (FGFs) and their receptors is increased by heparan sulfate glycosaminoglycans that function as coreceptors. Found in a complex with FGFBP1, FGF1 and FGF2. Interacts with FGFBP1. Part of a Cu(2+)-dependent multiprotein aggregate containing FGF1, S100A13 and SYT1. Interacts with SYT1. Interacts with S100A13. Interacts with LRRC59. Interacts with CSNKA, CSNKB and FIBP. While binding with LRRC59, CSNKA and FIBP seem mutually exclusive, CSNKB and FIBP may cooperatively interact with FGF1. Forms a ternary complex with FGFR1 and ITGAV:ITGB3 and induces the recruitment of PTPN11 to the complex. Post-translationally, in the nucleus, phosphorylated by PKC/PRKCD.

The protein localises to the secreted. It is found in the cytoplasm. The protein resides in the cell cortex. It localises to the cytosol. Its subcellular location is the nucleus. Its function is as follows. Plays an important role in the regulation of cell survival, cell division, angiogenesis, cell differentiation and cell migration. Functions as a potent mitogen in vitro. Acts as a ligand for FGFR1 and integrins. Binds to FGFR1 in the presence of heparin leading to FGFR1 dimerization and activation via sequential autophosphorylation on tyrosine residues which act as docking sites for interacting proteins, leading to the activation of several signaling cascades. Binds to integrin ITGAV:ITGB3. Its binding to integrin, subsequent ternary complex formation with integrin and FGFR1, and the recruitment of PTPN11 to the complex are essential for FGF1 signaling. Induces the phosphorylation and activation of FGFR1, FRS2, MAPK3/ERK1, MAPK1/ERK2 and AKT1. Can induce angiogenesis. This Mesocricetus auratus (Golden hamster) protein is Fibroblast growth factor 1 (FGF1).